A 249-amino-acid chain; its full sequence is MIT domain-containing protein 1 (249 aa).

The MIT domain occupies 8–86; sequence QDSDSTAAVA…KYLDQEKEDG (79 aa). The important for association with membranes stretch occupies residues 168 to 231; sequence SGLEEIKQSL…SLGYYDLDLR (64 aa).

As to quaternary structure, homodimer. Interacts (via MIT domain) with CHMP1A, CHMP1B, CHMP2A and IST1.

The protein localises to the late endosome membrane. It is found in the midbody. Its subcellular location is the membrane. Required for efficient abscission at the end of cytokinesis, together with components of the ESCRT-III complex. The protein is MIT domain-containing protein 1 (Mitd1) of Mus musculus (Mouse).